The sequence spans 171 residues: Galectin-related protein (171 aa).

In terms of domain architecture, Galectin spans 38–170 (PFCGHIKGGM…INGDLQLTKL (133 aa)).

Functionally, does not bind lactose, and may not bind carbohydrates. In Xenopus tropicalis (Western clawed frog), this protein is Galectin-related protein (lgalsl).